Here is a 130-residue protein sequence, read N- to C-terminus: Anti-adapter protein IraD (130 aa).

It belongs to the GpW/Gp25 family. IraD subfamily. In terms of assembly, interacts with RssB.

It localises to the cytoplasm. Inhibits RpoS proteolysis by regulating RssB activity, thereby increasing the stability of the sigma stress factor RpoS during oxidative stress. Its effect on RpoS stability is due to its interaction with RssB, which probably blocks the interaction of RssB with RpoS, and the consequent delivery of the RssB-RpoS complex to the ClpXP protein degradation pathway. This Escherichia coli O9:H4 (strain HS) protein is Anti-adapter protein IraD.